Here is a 223-residue protein sequence, read N- to C-terminus: Ethylene-inducing xylanase (223 aa).

An N-terminal signal peptide occupies residues 1–19 (MVSFTTLLAGFVAVTGVLS). The 190-residue stretch at 34–223 (QTIGPGTGFN…SSGNANINVS (190 aa)) folds into the GH11 domain. Asparagine 94 is a glycosylation site (N-linked (GlcNAc...) asparagine). Glutamate 119 functions as the Nucleophile in the catalytic mechanism. Glutamate 210 acts as the Proton donor in catalysis.

The protein belongs to the glycosyl hydrolase 11 (cellulase G) family. As to quaternary structure, interactc with tomato LeEix2 receptor to trigger its internalization.

It localises to the secreted. It carries out the reaction Endohydrolysis of (1-&gt;4)-beta-D-xylosidic linkages in xylans.. The protein operates within glycan degradation; xylan degradation. Functionally, endo-1,4-beta-xylanase involved in the hydrolysis of xylan, a major structural heterogeneous polysaccharide found in plant biomass representing the second most abundant polysaccharide in the biosphere, after cellulose. Acts as an elicitor of plant defense responses in hosts such as tobacco (Nicotiana tabacum) or tomato (Solanum lycopersicum). Induces the production of ethylene and leads alterations in membrane function with rapid efflux of potassium, uptake of calcium, alkalization of the medium, increased leakage of cellular components and necrosis in plant hosts. EIX is translocated through the xylem of the host plant to the leaf mesophyll, leading to host response to pathogen-derived extracellular proteins in tissues distant from the invading pathogen. Greatly enhances the expression of two calcineurin B-like proteins-interacting protein kinases (CIPKs) family members, OsCIPK14 and OsCIPK15, in rice cultured cells. In tomato, triggers the defense response via binding to and subsequent internalization of the LeEix2 receptor. The polypeptide is Ethylene-inducing xylanase (Hypocrea rufa (Trichoderma viride)).